The following is a 556-amino-acid chain: Calcium-dependent protein kinase 5 (556 aa).

Residues M1 to P40 are disordered. G2 carries N-myristoyl glycine lipidation. Residues S8–S25 show a composition bias toward basic and acidic residues. Positions K26–S39 are enriched in low complexity. The 259-residue stretch at Y97–I355 folds into the Protein kinase domain. Residues L103–T111 and K126 each bind ATP. Catalysis depends on D221, which acts as the Proton acceptor. Position 261 is a phosphoserine (S261). The autoinhibitory domain stretch occupies residues A361–I391. 4 EF-hand domains span residues E398–T433, L434–L469, E470–A505, and L509–G539. Ca(2+)-binding residues include D411, D413, S415, E422, D447, D449, S451, T453, E458, D483, D485, S487, E494, D517, N519, D521, K523, and E528.

Belongs to the protein kinase superfamily. Ser/Thr protein kinase family. CDPK subfamily.

The protein resides in the membrane. It carries out the reaction L-seryl-[protein] + ATP = O-phospho-L-seryl-[protein] + ADP + H(+). The catalysed reaction is L-threonyl-[protein] + ATP = O-phospho-L-threonyl-[protein] + ADP + H(+). Activated by calcium. Autophosphorylation may play an important role in the regulation of the kinase activity. May play a role in signal transduction pathways that involve calcium as a second messenger. The sequence is that of Calcium-dependent protein kinase 5 (CPK5) from Arabidopsis thaliana (Mouse-ear cress).